Reading from the N-terminus, the 343-residue chain is Methionine import ATP-binding protein MetN (343 aa).

Positions 2-241 (ITLSHITKQF…PKTPLAQAFI (240 aa)) constitute an ABC transporter domain. 38 to 45 (GASGAGKS) contacts ATP.

It belongs to the ABC transporter superfamily. Methionine importer (TC 3.A.1.24) family. In terms of assembly, the complex is composed of two ATP-binding proteins (MetN), two transmembrane proteins (MetI) and a solute-binding protein (MetQ).

It is found in the cell inner membrane. The catalysed reaction is L-methionine(out) + ATP + H2O = L-methionine(in) + ADP + phosphate + H(+). The enzyme catalyses D-methionine(out) + ATP + H2O = D-methionine(in) + ADP + phosphate + H(+). Part of the ABC transporter complex MetNIQ involved in methionine import. Responsible for energy coupling to the transport system. In Sodalis glossinidius (strain morsitans), this protein is Methionine import ATP-binding protein MetN.